The sequence spans 480 residues: ATP synthase subunit beta (480 aa).

Residue Gly-158–Thr-165 participates in ATP binding.

This sequence belongs to the ATPase alpha/beta chains family. F-type ATPases have 2 components, CF(1) - the catalytic core - and CF(0) - the membrane proton channel. CF(1) has five subunits: alpha(3), beta(3), gamma(1), delta(1), epsilon(1). CF(0) has three main subunits: a(1), b(2) and c(9-12). The alpha and beta chains form an alternating ring which encloses part of the gamma chain. CF(1) is attached to CF(0) by a central stalk formed by the gamma and epsilon chains, while a peripheral stalk is formed by the delta and b chains.

It localises to the cell inner membrane. It carries out the reaction ATP + H2O + 4 H(+)(in) = ADP + phosphate + 5 H(+)(out). Functionally, produces ATP from ADP in the presence of a proton gradient across the membrane. The catalytic sites are hosted primarily by the beta subunits. This is ATP synthase subunit beta from Koribacter versatilis (strain Ellin345).